The following is a 161-amino-acid chain: Phosphopantetheine adenylyltransferase (161 aa).

Ser9 provides a ligand contact to substrate. Residues Ser9 to Phe10 and His17 each bind ATP. The substrate site is built by Lys41, Thr73, and Arg87. ATP is bound by residues Gly88–Arg90, Glu98, and Tyr123–Ser129.

This sequence belongs to the bacterial CoaD family. In terms of assembly, homohexamer. Mg(2+) is required as a cofactor.

It is found in the cytoplasm. It carries out the reaction (R)-4'-phosphopantetheine + ATP + H(+) = 3'-dephospho-CoA + diphosphate. It functions in the pathway cofactor biosynthesis; coenzyme A biosynthesis; CoA from (R)-pantothenate: step 4/5. Reversibly transfers an adenylyl group from ATP to 4'-phosphopantetheine, yielding dephospho-CoA (dPCoA) and pyrophosphate. The polypeptide is Phosphopantetheine adenylyltransferase (Levilactobacillus brevis (strain ATCC 367 / BCRC 12310 / CIP 105137 / JCM 1170 / LMG 11437 / NCIMB 947 / NCTC 947) (Lactobacillus brevis)).